Consider the following 398-residue polypeptide: Serine/threonine-protein kinase ppk23 (398 aa).

The region spanning 74-359 (YEILEKIEEG…AKEALEHPYF (286 aa)) is the Protein kinase domain. Residues 80–88 (IEEGSYGIV) and Lys-103 each bind ATP. Asp-198 functions as the Proton acceptor in the catalytic mechanism. Residues 359–398 (FYESPRPKDPKFFPTFPSKAKGESKEKNVFQSFRSASPKK) are disordered. Residues 387 to 398 (VFQSFRSASPKK) show a composition bias toward polar residues.

This sequence belongs to the protein kinase superfamily. Ser/Thr protein kinase family.

Its subcellular location is the nucleus. It catalyses the reaction L-seryl-[protein] + ATP = O-phospho-L-seryl-[protein] + ADP + H(+). It carries out the reaction L-threonyl-[protein] + ATP = O-phospho-L-threonyl-[protein] + ADP + H(+). In Schizosaccharomyces pombe (strain 972 / ATCC 24843) (Fission yeast), this protein is Serine/threonine-protein kinase ppk23 (ppk23).